Here is a 185-residue protein sequence, read N- to C-terminus: Photosystem I assembly protein Ycf4 (185 aa).

Helical transmembrane passes span 20–40 (GNFFWACILFLGSLGFLAVGA) and 57–77 (ILFFPQGVVMSFYGIAGLFIS).

This sequence belongs to the Ycf4 family.

It is found in the plastid. The protein resides in the chloroplast thylakoid membrane. Seems to be required for the assembly of the photosystem I complex. The chain is Photosystem I assembly protein Ycf4 from Sorghum bicolor (Sorghum).